A 168-amino-acid polypeptide reads, in one-letter code: 3-isopropylmalate dehydratase small subunit 2 (168 aa).

This sequence belongs to the LeuD family. LeuD type 2 subfamily. As to quaternary structure, heterodimer of LeuC and LeuD.

It catalyses the reaction (2R,3S)-3-isopropylmalate = (2S)-2-isopropylmalate. It participates in amino-acid biosynthesis; L-leucine biosynthesis; L-leucine from 3-methyl-2-oxobutanoate: step 2/4. Its function is as follows. Catalyzes the isomerization between 2-isopropylmalate and 3-isopropylmalate, via the formation of 2-isopropylmaleate. This is 3-isopropylmalate dehydratase small subunit 2 (leuD2) from Methanopyrus kandleri (strain AV19 / DSM 6324 / JCM 9639 / NBRC 100938).